Consider the following 115-residue polypeptide: Large ribosomal subunit protein bL19 (115 aa).

This sequence belongs to the bacterial ribosomal protein bL19 family.

This protein is located at the 30S-50S ribosomal subunit interface and may play a role in the structure and function of the aminoacyl-tRNA binding site. The polypeptide is Large ribosomal subunit protein bL19 (Streptococcus equi subsp. zooepidemicus (strain H70)).